The following is a 148-amino-acid chain: MDTQSFKTFNAKPDEVERDWYVVDATNQVVGRLASQIARVLRGKHKPTFTPHVDTGDYVIVVNADKARFTGKKEKQKEYHEYSGYPGGDHSHSPEEMRADKPTYIIREAVEGMLPTGPLGRDTFKKLKVYAGPDHPHEAQQPEPLDNA.

2 stretches are compositionally biased toward basic and acidic residues: residues 71–81 (GKKEKQKEYHE) and 89–99 (DHSHSPEEMRA). Disordered stretches follow at residues 71-99 (GKKEKQKEYHEYSGYPGGDHSHSPEEMRA) and 125-148 (KKLKVYAGPDHPHEAQQPEPLDNA).

This sequence belongs to the universal ribosomal protein uL13 family. In terms of assembly, part of the 50S ribosomal subunit.

Functionally, this protein is one of the early assembly proteins of the 50S ribosomal subunit, although it is not seen to bind rRNA by itself. It is important during the early stages of 50S assembly. This Salinibacter ruber (strain DSM 13855 / M31) protein is Large ribosomal subunit protein uL13.